Consider the following 325-residue polypeptide: MNALTAVQNNAVDSDQDYSGFTLIPSAQSPRLLELTFTEQTTKQFLEQVAEWPVQALEYKSFLRFRVGKILDDLCANQLQPLLLKTLLNRAEGALLINAVGVDDVKQADEMVKLATAVAHLIGRSNFDAMSGQYYARFVVKNVDNSDSYLRQPHRVMELHNDGTYVEEITDYVLMMKIDEQNMQGGNSLLLHLDDWEHLDHYFRHPMARRPMRFAAPPSKNVSKDVFHPVFDVDQQGRPVMRYIDQFVQPKDFEEGVWLSELSDAIEISKGILSVPVPVGKFLLINNLFWLHGRDRFTPHPDLRRELMRQRGYFAYATHHYQTHQ.

His160, Asp162, and His292 together coordinate Fe cation.

This sequence belongs to the glutarate hydroxylase family. As to quaternary structure, homotetramer. Fe(2+) serves as cofactor.

It carries out the reaction glutarate + 2-oxoglutarate + O2 = (S)-2-hydroxyglutarate + succinate + CO2. It participates in amino-acid degradation. Functionally, acts as an alpha-ketoglutarate-dependent dioxygenase catalyzing hydroxylation of glutarate (GA) to L-2-hydroxyglutarate (L2HG). Functions in a L-lysine degradation pathway that proceeds via cadaverine, glutarate and L-2-hydroxyglutarate. The protein is Glutarate 2-hydroxylase of Escherichia coli O157:H7.